The sequence spans 396 residues: Purine ribonucleoside efflux pump NepI (396 aa).

Topologically, residues 1-21 are cytoplasmic; that stretch reads MSEFIAENRGANAITRPNWSA. A helical transmembrane segment spans residues 22-42; it reads VFSVAFCVACLIIVEFLPVSL. Residues 43 to 54 are Periplasmic-facing; it reads LTPMAQDLGISE. The helical transmembrane segment at 55–75 threads the bilayer; that stretch reads GVAGQSVTVTAFVAMFASLFI. Residues 76–85 are Cytoplasmic-facing; it reads TQTIQATDRR. A helical membrane pass occupies residues 86-106; it reads YVVILFAVLLTLSCLLVSFAN. Position 107 (serine 107) is a topological domain, periplasmic. Residues 108–128 traverse the membrane as a helical segment; that stretch reads FSLLLIGRACLGVALGGFWAI. The Cytoplasmic portion of the chain corresponds to 129–147; it reads SASLTMRLVPPRTVPKALS. The helical transmembrane segment at 148–168 threads the bilayer; it reads VIFGAVSIALVIAAPLGSFLG. Residues 169 to 175 lie on the Periplasmic side of the membrane; that stretch reads ELIGWRN. A helical transmembrane segment spans residues 176–196; the sequence is VFNAAAAMGVLCIFWIIKSLP. At 197–215 the chain is on the cytoplasmic side; that stretch reads SLPGEPSHQKQNTFRLLQR. The chain crosses the membrane as a helical span at residues 216-236; the sequence is PGVMAGMIAIFMSFAGQFAFF. The Periplasmic segment spans residues 237-255; that stretch reads TYIRPVYMNLAGFGVDGLT. A helical transmembrane segment spans residues 256–276; sequence LVLLSFGIASFVGTSLSSFIL. The Cytoplasmic segment spans residues 277–281; sequence KRSVK. Residues 282-302 traverse the membrane as a helical segment; that stretch reads LALAGAPFVLALSALVLTLWG. Residues 303–305 are Periplasmic-facing; that stretch reads SDK. The chain crosses the membrane as a helical span at residues 306–326; the sequence is IVATGVAIIWGLTFALIPVGW. Residues 327–343 lie on the Cytoplasmic side of the membrane; that stretch reads STWITRSLADQAEKAGS. A helical membrane pass occupies residues 344–364; that stretch reads IQVAVIQLANTCGAAIGGYAL. At 365–366 the chain is on the periplasmic side; it reads DN. Residues 367–387 form a helical membrane-spanning segment; sequence IGLTSPLMLSGTLMLLTALLV. The Cytoplasmic segment spans residues 388–396; that stretch reads TAKVKMKKS.

The protein belongs to the major facilitator superfamily. DHA1 family. NepI (TC 2.A.1.2.26) subfamily.

It is found in the cell inner membrane. The enzyme catalyses inosine(in) + H(+)(out) = inosine(out) + H(+)(in). It catalyses the reaction guanosine(in) + H(+)(out) = guanosine(out) + H(+)(in). In terms of biological role, involved in the efflux of purine ribonucleosides, such as inosine and guanosine. The chain is Purine ribonucleoside efflux pump NepI from Escherichia coli O6:K15:H31 (strain 536 / UPEC).